Reading from the N-terminus, the 591-residue chain is Proteasome-associated ATPase (591 aa).

The stretch at V10 to Q77 forms a coiled coil. Residue G278–L283 coordinates ATP. The interval Y590 to L591 is docks into pockets in the proteasome alpha-ring.

Belongs to the AAA ATPase family. Homohexamer. Assembles into a hexameric ring structure that likely caps the 20S proteasome core. Can form a complex composed of two stacked hexameric rings in vitro. Probably interacts with the prokaryotic ubiquitin-like protein Pup through a hydrophobic interface; the expected interacting region of ARC lies in its N-terminal coiled-coil domain. There is likely one Pup binding site per ARC hexamer ring. Upon ATP-binding, the C-terminus of ARC probably interacts with the alpha-rings of the proteasome core, possibly by binding to the intersubunit pockets.

The protein operates within protein degradation; proteasomal Pup-dependent pathway. With respect to regulation, ATPase activity is inhibited by N-ethylmaleimide (NEM) but not by sodium azide. Functionally, ATPase which is responsible for recognizing, binding, unfolding and translocation of pupylated proteins into the bacterial 20S proteasome core particle. May be essential for opening the gate of the 20S proteasome via an interaction with its C-terminus, thereby allowing substrate entry and access to the site of proteolysis. Thus, the C-termini of the proteasomal ATPase may function like a 'key in a lock' to induce gate opening and therefore regulate proteolysis. This Rhodococcus erythropolis (Arthrobacter picolinophilus) protein is Proteasome-associated ATPase.